We begin with the raw amino-acid sequence, 164 residues long: UPF0114 protein YqhA (164 aa).

The next 3 membrane-spanning stretches (helical) occupy residues 15-35, 53-73, and 136-156; these read LLAPVYFGLSLALVALALKFF, LILVLLSLVDMTLVGGLLVMV, and LMWYVIIHLTFVLSAFVMGYL.

The protein belongs to the UPF0114 family.

Its subcellular location is the cell membrane. This is UPF0114 protein YqhA from Escherichia coli O139:H28 (strain E24377A / ETEC).